A 194-amino-acid chain; its full sequence is Fe/S biogenesis protein NfuA (194 aa).

The [4Fe-4S] cluster site is built by Cys151 and Cys154.

It belongs to the NfuA family. As to quaternary structure, homodimer. [4Fe-4S] cluster serves as cofactor.

Functionally, involved in iron-sulfur cluster biogenesis. Binds a 4Fe-4S cluster, can transfer this cluster to apoproteins, and thereby intervenes in the maturation of Fe/S proteins. Could also act as a scaffold/chaperone for damaged Fe/S proteins. The polypeptide is Fe/S biogenesis protein NfuA (Mannheimia succiniciproducens (strain KCTC 0769BP / MBEL55E)).